We begin with the raw amino-acid sequence, 2434 residues long: ATP-binding cassette sub-family A member 2 (2434 aa).

N-linked (GlcNAc...) asparagine glycosylation is present at Asn14. 2 helical membrane-spanning segments follow: residues 22-42 and 54-74; these read PWVL…LLGL and AFYT…QSLC. Residues Asn89, Asn168, and Asn173 are each glycosylated (N-linked (GlcNAc...) asparagine). Gln271 carries the N5-methylglutamine modification. Asn305, Asn368, Asn379, Asn420, Asn432, Asn476, Asn484, Asn494, Asn530, Asn549, Asn590, Asn600, and Asn628 each carry an N-linked (GlcNAc...) asparagine glycan. The span at 354 to 369 shows a compositional bias: low complexity; sequence RAPAPQAGSPSGPANS. The interval 354–396 is disordered; sequence RAPAPQAGSPSGPANSTGVGANTGPNTTVEEGTQSPVTPASPD. Residues 370–396 show a composition bias toward polar residues; the sequence is TGVGANTGPNTTVEEGTQSPVTPASPD. Transmembrane regions (helical) follow at residues 699–719, 750–770, 782–802, 813–833, 857–877, and 893–913; these read FLFV…VYSV, VAWF…LTAI, VLII…FCFL, ASAC…YVAI, AFGL…GIQW, and LLAV…TWYI. The 232-residue stretch at 990–1221 folds into the ABC transporter 1 domain; it reads VCVDKLTKVY…YGDGYRLTLV (232 aa). 1024 to 1031 is a binding site for ATP; it reads GHNGAGKT. Residues 1225–1246 are disordered; the sequence is AEPGTSQEPGMASSPSGRPQLS. The span at 1228–1246 shows a compositional bias: polar residues; sequence GTSQEPGMASSPSGRPQLS. Ser1238 carries the phosphoserine modification. Asn1247 carries N-linked (GlcNAc...) asparagine glycosylation. Ser1327 and Ser1331 each carry phosphoserine. A helical transmembrane segment spans residues 1461-1481; sequence ILLPAFFVCVAMTVALSVPEI. 3 N-linked (GlcNAc...) asparagine glycosylation sites follow: Asn1496, Asn1549, and Asn1557. Positions 1587–1606 are disordered; the sequence is NFVPPPPSPAPSDSPLSPDE. Over residues 1589–1598 the composition is skewed to pro residues; that stretch reads VPPPPSPAPS. Asn1613, Asn1678, and Asn1776 each carry an N-linked (GlcNAc...) asparagine glycan. Transmembrane regions (helical) follow at residues 1793-1813, 1842-1862, 1873-1893, 1906-1926, and 1992-2012; these read VVIA…FVVF, VWDM…LFVF, FPAV…IMYP, VFLI…TFLL, and GLVA…MCQY. The 236-residue stretch at 2051–2286 folds into the ABC transporter 2 domain; sequence VKIENLTKVY…FGDGYMITVR (236 aa). A glycan (N-linked (GlcNAc...) asparagine) is linked at Asn2055. 2088–2095 is an ATP binding site; the sequence is GVNGAGKT. Thr2411 carries the phosphothreonine modification.

Belongs to the ABC transporter superfamily. ABCA family. Post-translationally, N-glycosylated. In terms of processing, methylated at Gln-271 by N6AMT1. In terms of tissue distribution, expressed at high levels in brain, at moderate levels in heart, kidney and lung, and at low levels in skeletal muscle, stomach, spleen, colon and pancreas. Not detected in the liver or small intestine. In brain, highly expressed in white matter and detected in oligodendrocytes. Expressed in cerebellum as well as the anterior commissure. Expressed mainly in the white matter but is also scattered in gray matter throughout the whole brain. Expressed in myelinating cells of both ventral and dorsal restricted regions in newborn spinal cord. Expressed in non-myelin-forming as well as in myelin-forming Schwann cells in the sciatic nerve.

Its subcellular location is the endosome membrane. The protein resides in the lysosome membrane. Probable transporter, its natural substrate has not been found yet. May have a role in macrophage lipid metabolism and neural development. May play a role in myelination, perhaps as a transporter for certain kinds of myelin chemical components. May play an important role in gamma-secretase processing of APP and thus in amyloid-beta peptide generation. Regulates esterification of plasma membrane cholesterol by modulation of sphingolipid metabolism. In terms of biological role, probable lipid transporter that modulates cholesterol sequestration in the late endosome/lysosome by regulating the intracellular sphingolipid metabolism, in turn participates in cholesterol homeostasis. May alter the transbilayer distribution of ceramide in the intraluminal membrane lipid bilayer, favoring its retention in the outer leaflet that results in increased acid ceramidase activity in the late endosome/lysosome, facilitating ceramide deacylation to sphingosine leading to the sequestration of free cholesterol in lysosomes. In addition regulates amyloid-beta production either by activating a signaling pathway that regulates amyloid precursor protein transcription through the modulation of sphingolipid metabolism or through its role in gamma-secretase processing of APP. May play a role in myelin formation. This is ATP-binding cassette sub-family A member 2 from Rattus norvegicus (Rat).